The sequence spans 415 residues: Lipoyl synthase, mitochondrial (415 aa).

A mitochondrion-targeting transit peptide spans 1-32 (MAVSTSHFRSLCASSRSLSRTGIVAPISCRGY). Positions 30-50 (RGYATTEPSPSATSTTTTTTA) are disordered. Over residues 33-49 (ATTEPSPSATSTTTTTT) the composition is skewed to low complexity. Residues cysteine 132, cysteine 137, cysteine 143, cysteine 163, cysteine 167, cysteine 170, and serine 378 each contribute to the [4Fe-4S] cluster site. The region spanning 146 to 367 (GSDKSAATAT…RQRALDMGFL (222 aa)) is the Radical SAM core domain.

The protein belongs to the radical SAM superfamily. Lipoyl synthase family. It depends on [4Fe-4S] cluster as a cofactor.

The protein resides in the mitochondrion. It catalyses the reaction [[Fe-S] cluster scaffold protein carrying a second [4Fe-4S](2+) cluster] + N(6)-octanoyl-L-lysyl-[protein] + 2 oxidized [2Fe-2S]-[ferredoxin] + 2 S-adenosyl-L-methionine + 4 H(+) = [[Fe-S] cluster scaffold protein] + N(6)-[(R)-dihydrolipoyl]-L-lysyl-[protein] + 4 Fe(3+) + 2 hydrogen sulfide + 2 5'-deoxyadenosine + 2 L-methionine + 2 reduced [2Fe-2S]-[ferredoxin]. The protein operates within protein modification; protein lipoylation via endogenous pathway; protein N(6)-(lipoyl)lysine from octanoyl-[acyl-carrier-protein]: step 2/2. Functionally, catalyzes the radical-mediated insertion of two sulfur atoms into the C-6 and C-8 positions of the octanoyl moiety bound to the lipoyl domains of lipoate-dependent enzymes, thereby converting the octanoylated domains into lipoylated derivatives. The polypeptide is Lipoyl synthase, mitochondrial (Neosartorya fischeri (strain ATCC 1020 / DSM 3700 / CBS 544.65 / FGSC A1164 / JCM 1740 / NRRL 181 / WB 181) (Aspergillus fischerianus)).